The sequence spans 28 residues: Endoglucanase (28 aa).

Catalysis depends on Glu20, which acts as the Nucleophile.

It belongs to the glycosyl hydrolase 5 (cellulase A) family.

The protein localises to the cell membrane. The catalysed reaction is Endohydrolysis of (1-&gt;4)-beta-D-glucosidic linkages in cellulose, lichenin and cereal beta-D-glucans.. This Schizophyllum commune (Split gill fungus) protein is Endoglucanase.